The sequence spans 367 residues: 15-cis-zeta-carotene isomerase, chloroplastic (367 aa).

Residues 1–58 constitute a chloroplast transit peptide; that stretch reads MAVYHLLLSSPPSLLLLPPSPRRPNLTLIRRIPAHPRLGNSTSLLSSSSPVIRKILVR. Helical transmembrane passes span 95 to 115, 137 to 157, 172 to 192, 211 to 231, 269 to 289, and 339 to 359; these read SWVY…VVWI, EVAM…LASL, VLFA…FINH, AIWV…FNLL, LWIG…HHLF, and LPYL…PLMQ.

In terms of tissue distribution, expressed in leaves and at lower levels in roots.

The protein resides in the plastid. It localises to the chloroplast membrane. The enzyme catalyses 9,9',15-tri-cis-zeta-carotene = 9,9'-di-cis-zeta-carotene. Functionally, isomerase involved in the biosynthesis of carotenoids. Catalyzes the cis- to trans-conversion of the 15-cis-bond in 9,15,9'-tri-cis-zeta-carotene. In Arabidopsis thaliana (Mouse-ear cress), this protein is 15-cis-zeta-carotene isomerase, chloroplastic (Z-ISO).